The sequence spans 383 residues: GTP-binding protein 10 homolog (383 aa).

An Obg domain is found at 22–157 (PSFLDTLRLA…RIVNLDLKLI (136 aa)). Residues 158-353 (ADVGLVGFPN…VKSQLRRTLV (196 aa)) form the OBG-type G domain. GTP contacts are provided by residues 164 to 171 (GFPNAGKS), 211 to 215 (DLPGL), and 287 to 290 (NKMD).

It belongs to the TRAFAC class OBG-HflX-like GTPase superfamily. OBG GTPase family.

The protein resides in the nucleus. Its subcellular location is the nucleolus. Functionally, may be involved in the ribosome maturation process. The protein is GTP-binding protein 10 homolog of Drosophila pseudoobscura pseudoobscura (Fruit fly).